Reading from the N-terminus, the 435-residue chain is Tol-Pal system protein TolB (435 aa).

The signal sequence occupies residues 1 to 28; the sequence is MTKCSFFRAILVAVGLMTAAVFATPANA. The interval 288 to 310 is disordered; sequence STAAIDTSPSYSPDGARVSFESD.

The protein belongs to the TolB family. As to quaternary structure, the Tol-Pal system is composed of five core proteins: the inner membrane proteins TolA, TolQ and TolR, the periplasmic protein TolB and the outer membrane protein Pal. They form a network linking the inner and outer membranes and the peptidoglycan layer.

It is found in the periplasm. Its function is as follows. Part of the Tol-Pal system, which plays a role in outer membrane invagination during cell division and is important for maintaining outer membrane integrity. The chain is Tol-Pal system protein TolB from Rhizobium johnstonii (strain DSM 114642 / LMG 32736 / 3841) (Rhizobium leguminosarum bv. viciae).